Here is a 342-residue protein sequence, read N- to C-terminus: Isopentenyl-diphosphate delta-isomerase (342 aa).

Position 11 to 12 (11 to 12) interacts with substrate; it reads RK. FMN contacts are provided by residues S68, 69-71, S99, and N128; that span reads SMT. A substrate-binding site is contributed by 99 to 101; sequence SQR. Q162 is a substrate binding site. Residue E163 participates in Mg(2+) binding. FMN contacts are provided by residues K194, S219, T224, 275 to 277, and 296 to 297; these read GVR and AK.

The protein belongs to the IPP isomerase type 2 family. In terms of assembly, homooctamer. Dimer of tetramers. FMN serves as cofactor. The cofactor is NADPH. It depends on Mg(2+) as a cofactor.

The protein localises to the cytoplasm. The catalysed reaction is isopentenyl diphosphate = dimethylallyl diphosphate. Involved in the biosynthesis of isoprenoids. Catalyzes the 1,3-allylic rearrangement of the homoallylic substrate isopentenyl (IPP) to its allylic isomer, dimethylallyl diphosphate (DMAPP). The polypeptide is Isopentenyl-diphosphate delta-isomerase (Legionella pneumophila (strain Lens)).